The chain runs to 357 residues: Poly(3-hydroxyalkanoate) polymerase subunit PhaE (357 aa).

The disordered stretch occupies residues 320-357; the sequence is AALAGEEPATKPATALRSPAPAAKAPARRRTTKTNPAD. Residues 331-344 show a composition bias toward low complexity; that stretch reads PATALRSPAPAAKA.

This sequence belongs to the PHA/PHB synthase family. Type III PhaE subfamily. In terms of assembly, a large complex of PhaC and PhaE; the ratio of the subunits has been estimated to be from 1:1 to 4:1, with more PhaE than PhaC.

Its subcellular location is the cytoplasm. Its pathway is biopolymer metabolism; poly-(R)-3-hydroxybutanoate biosynthesis. Functionally, polymerizes D(-)-3-hydroxybutyryl-CoA to create polyhydroxybutyrate (PHB) which consists of thousands of hydroxybutyrate molecules linked end to end. This subunit has no catalytic activity but enhances the activity of PhaC, the catalytic subunit, 100-fold. The sequence is that of Poly(3-hydroxyalkanoate) polymerase subunit PhaE from Allochromatium vinosum (strain ATCC 17899 / DSM 180 / NBRC 103801 / NCIMB 10441 / D) (Chromatium vinosum).